Consider the following 567-residue polypeptide: Probable serine/threonine-protein kinase WNK6 (567 aa).

A Protein kinase domain is found at 28–285 (IRYKEVIGKG…AKELLLDPFL (258 aa)). ATP is bound by residues 108–111 (TELF) and lysine 158. The active-site Proton acceptor is the aspartate 175. Basic and acidic residues predominate over residues 499–509 (VDATKGEDKSS). The segment at 499-528 (VDATKGEDKSSIQEVEEATEPVSLEEEERL) is disordered. Positions 512–525 (EVEEATEPVSLEEE) are enriched in acidic residues. A coiled-coil region spans residues 519–553 (PVSLEEEERLRQELEEIEAKYQEDMKEIATKREEA).

Belongs to the protein kinase superfamily. Ser/Thr protein kinase family. WNK subfamily.

It catalyses the reaction L-seryl-[protein] + ATP = O-phospho-L-seryl-[protein] + ADP + H(+). It carries out the reaction L-threonyl-[protein] + ATP = O-phospho-L-threonyl-[protein] + ADP + H(+). In terms of biological role, may regulate flowering time by modulating the photoperiod pathway. This Arabidopsis thaliana (Mouse-ear cress) protein is Probable serine/threonine-protein kinase WNK6 (WNK6).